Here is a 562-residue protein sequence, read N- to C-terminus: Dihydroxy-acid dehydratase (562 aa).

Aspartate 80 lines the Mg(2+) pocket. A [2Fe-2S] cluster-binding site is contributed by cysteine 121. Residues aspartate 122 and lysine 123 each contribute to the Mg(2+) site. Lysine 123 bears the N6-carboxylysine mark. A [2Fe-2S] cluster-binding site is contributed by cysteine 194. A Mg(2+)-binding site is contributed by glutamate 446. The active-site Proton acceptor is serine 472.

It belongs to the IlvD/Edd family. In terms of assembly, homodimer. [2Fe-2S] cluster serves as cofactor. It depends on Mg(2+) as a cofactor.

The catalysed reaction is (2R)-2,3-dihydroxy-3-methylbutanoate = 3-methyl-2-oxobutanoate + H2O. It carries out the reaction (2R,3R)-2,3-dihydroxy-3-methylpentanoate = (S)-3-methyl-2-oxopentanoate + H2O. It functions in the pathway amino-acid biosynthesis; L-isoleucine biosynthesis; L-isoleucine from 2-oxobutanoate: step 3/4. The protein operates within amino-acid biosynthesis; L-valine biosynthesis; L-valine from pyruvate: step 3/4. In terms of biological role, functions in the biosynthesis of branched-chain amino acids. Catalyzes the dehydration of (2R,3R)-2,3-dihydroxy-3-methylpentanoate (2,3-dihydroxy-3-methylvalerate) into 2-oxo-3-methylpentanoate (2-oxo-3-methylvalerate) and of (2R)-2,3-dihydroxy-3-methylbutanoate (2,3-dihydroxyisovalerate) into 2-oxo-3-methylbutanoate (2-oxoisovalerate), the penultimate precursor to L-isoleucine and L-valine, respectively. The polypeptide is Dihydroxy-acid dehydratase (Staphylococcus aureus (strain MRSA252)).